Here is a 163-residue protein sequence, read N- to C-terminus: Nucleotide-binding protein PC1_1036 (163 aa).

Belongs to the YajQ family.

Its function is as follows. Nucleotide-binding protein. In Pectobacterium carotovorum subsp. carotovorum (strain PC1), this protein is Nucleotide-binding protein PC1_1036.